The following is a 766-amino-acid chain: Serine/threonine-protein kinase DCLK2 (766 aa).

A disordered region spans residues 1–45 (MASTRSIELEHFEERDKRPRPGSRRGAPSSSGGSSSSGPKGNGLI). Residues 7 to 19 (IELEHFEERDKRP) are compositionally biased toward basic and acidic residues. The segment covering 24-39 (RRGAPSSSGGSSSSGP) has biased composition (low complexity). Threonine 61 carries the phosphothreonine modification. 2 consecutive Doublecortin domains span residues 72–158 (KKAR…VDYT) and 197–280 (KLVT…AQDD). Low complexity-rich tracts occupy residues 300 to 312 (AVKYSGSKSPGPS) and 324 to 347 (TPSSQLSTPKSTKSSSSSPTSPGS). A disordered region spans residues 300 to 378 (AVKYSGSKSP…ELDRCISPEG (79 aa)). Phosphoserine is present on serine 362. The Protein kinase domain occupies 394-651 (YKIGKVIGDG…AGQILSHPWV (258 aa)). ATP contacts are provided by residues 400–408 (IGDGNFAVV) and lysine 423. Catalysis depends on aspartate 515, which acts as the Proton acceptor. Phosphoserine is present on serine 647. Phosphothreonine is present on threonine 666. Positions 707-766 (CQDSGRPGMEPISPVPPSVEEIPVPGEAVPAPTPPESPTPHPPPAAPGGERAGTWRRHRD) are disordered. Low complexity predominate over residues 724–736 (SVEEIPVPGEAVP). The segment covering 737 to 752 (APTPPESPTPHPPPAA) has biased composition (pro residues).

It belongs to the protein kinase superfamily. CAMK Ser/Thr protein kinase family. CaMK subfamily. In terms of assembly, binds to and stabilizes microtubules. Interacts with MAPK8IP1/JIP-1, MAPK8IP2/JIP-2, MAPK9/JNK2, PPP1R9B/NEURABIN-2 and actin. Autophosphorylated. As to expression, expressed in the brain, heart and eyes.

The protein localises to the cytoplasm. It localises to the cytoskeleton. It catalyses the reaction L-seryl-[protein] + ATP = O-phospho-L-seryl-[protein] + ADP + H(+). The catalysed reaction is L-threonyl-[protein] + ATP = O-phospho-L-threonyl-[protein] + ADP + H(+). In terms of biological role, protein kinase with a significantly reduced C(a2+)/CAM affinity and dependence compared to other members of the CaMK family. May play a role in the down-regulation of CRE-dependent gene activation probably by phosphorylation of the CREB coactivator CRTC2/TORC2 and the resulting retention of TORC2 in the cytoplasm. This chain is Serine/threonine-protein kinase DCLK2 (DCLK2), found in Homo sapiens (Human).